Reading from the N-terminus, the 299-residue chain is HTH-type transcriptional regulator ArgP (299 aa).

The HTH lysR-type domain maps to 4 to 60 (PDYRALQALDAVIRERGFERAAQKLCITQSAVSQRIKQLENLFGQPLLVRTVPPQPT). Positions 21 to 40 (FERAAQKLCITQSAVSQRIK) form a DNA-binding region, H-T-H motif.

It belongs to the LysR transcriptional regulatory family. As to quaternary structure, homodimer.

Its function is as follows. Controls the transcription of genes involved in arginine and lysine metabolism. This Proteus mirabilis (strain HI4320) protein is HTH-type transcriptional regulator ArgP.